A 298-amino-acid chain; its full sequence is Putative insertion sequence ATP-binding protein y4iQ/y4nD/y4sD (298 aa).

114–121 (GPPGGGKS) lines the ATP pocket. Residues 276-298 (RQSEHDETLASDNQHDTFMPTAT) form a disordered region.

The protein belongs to the IS21/IS1162 putative ATP-binding protein family.

In Sinorhizobium fredii (strain NBRC 101917 / NGR234), this protein is Putative insertion sequence ATP-binding protein y4iQ/y4nD/y4sD.